Consider the following 391-residue polypeptide: 1-deoxy-D-xylulose 5-phosphate reductoisomerase (391 aa).

The NADPH site is built by T10, G11, S12, I13, N38, and N122. K123 serves as a coordination point for 1-deoxy-D-xylulose 5-phosphate. E124 contacts NADPH. D148 contacts Mn(2+). 1-deoxy-D-xylulose 5-phosphate is bound by residues S149, E150, S173, and H196. Mn(2+) is bound at residue E150. An NADPH-binding site is contributed by G202. 1-deoxy-D-xylulose 5-phosphate is bound by residues S209, N214, K215, and E218. Position 218 (E218) interacts with Mn(2+).

Belongs to the DXR family. Mg(2+) serves as cofactor. Mn(2+) is required as a cofactor.

The enzyme catalyses 2-C-methyl-D-erythritol 4-phosphate + NADP(+) = 1-deoxy-D-xylulose 5-phosphate + NADPH + H(+). It functions in the pathway isoprenoid biosynthesis; isopentenyl diphosphate biosynthesis via DXP pathway; isopentenyl diphosphate from 1-deoxy-D-xylulose 5-phosphate: step 1/6. Catalyzes the NADPH-dependent rearrangement and reduction of 1-deoxy-D-xylulose-5-phosphate (DXP) to 2-C-methyl-D-erythritol 4-phosphate (MEP). The chain is 1-deoxy-D-xylulose 5-phosphate reductoisomerase from Wolbachia pipientis subsp. Culex pipiens (strain wPip).